A 182-amino-acid chain; its full sequence is uncharacterized protein (182 aa).

The segment at 40–182 (LLKTDDDDDD…EEIQRNQKGN (143 aa)) is disordered. Residues 52–86 (NNININNNNATITTTSTTTTTTTTSTTKTFTISTD) show a composition bias toward low complexity. Positions 87–100 (NYDEDVNDDQDEGD) are enriched in acidic residues. Composition is skewed to low complexity over residues 104–134 (NNNN…NNNN) and 148–157 (DLDFNNQNNN). A compositionally biased stretch (basic and acidic residues) spans 165 to 182 (FLSKDDNIEEIQRNQKGN).

This is an uncharacterized protein from Dictyostelium discoideum (Social amoeba).